Consider the following 640-residue polypeptide: Chaperone protein DnaK (640 aa).

Thr196 bears the Phosphothreonine; by autocatalysis mark. 2 disordered regions span residues Gly487 to Ile526 and Ser593 to Lys640. Residues Thr501–Ile526 show a composition bias toward basic and acidic residues. Residues Leu595–Asp613 show a composition bias toward polar residues. The segment covering Ala630–Lys640 has biased composition (acidic residues).

This sequence belongs to the heat shock protein 70 family.

Functionally, acts as a chaperone. The protein is Chaperone protein DnaK of Pelodictyon phaeoclathratiforme (strain DSM 5477 / BU-1).